We begin with the raw amino-acid sequence, 204 residues long: Pre-mRNA leakage protein 1 (204 aa).

The region spanning 104 to 172 is the FHA domain; the sequence is YLVGRELGHS…NGTCLNNVVI (69 aa).

Belongs to the pre-mRNA retention and splicing (RES) complex composed of at least BUD13, IST3 and PML1.

It localises to the cytoplasm. The protein localises to the nucleus. Required for efficient splicing and pre-mRNA nuclear retention. The protein is Pre-mRNA leakage protein 1 (PML1) of Saccharomyces cerevisiae (strain ATCC 204508 / S288c) (Baker's yeast).